The chain runs to 872 residues: Alanine--tRNA ligase (872 aa).

Positions 566, 570, 668, and 672 each coordinate Zn(2+).

This sequence belongs to the class-II aminoacyl-tRNA synthetase family. It depends on Zn(2+) as a cofactor.

It is found in the cytoplasm. It catalyses the reaction tRNA(Ala) + L-alanine + ATP = L-alanyl-tRNA(Ala) + AMP + diphosphate. Catalyzes the attachment of alanine to tRNA(Ala) in a two-step reaction: alanine is first activated by ATP to form Ala-AMP and then transferred to the acceptor end of tRNA(Ala). Also edits incorrectly charged Ser-tRNA(Ala) and Gly-tRNA(Ala) via its editing domain. The polypeptide is Alanine--tRNA ligase (Lactococcus lactis subsp. cremoris (strain MG1363)).